Here is a 487-residue protein sequence, read N- to C-terminus: Kynureninase 1 (487 aa).

Pyridoxal 5'-phosphate contacts are provided by residues Leu-147, Thr-148, 175–178 (FPSD), Ser-232, Asp-261, His-264, and Tyr-286. Lys-287 carries the post-translational modification N6-(pyridoxal phosphate)lysine. Pyridoxal 5'-phosphate-binding residues include Trp-327 and Asn-355.

It belongs to the kynureninase family. In terms of assembly, homodimer. The cofactor is pyridoxal 5'-phosphate.

The protein localises to the cytoplasm. It carries out the reaction L-kynurenine + H2O = anthranilate + L-alanine + H(+). The enzyme catalyses 3-hydroxy-L-kynurenine + H2O = 3-hydroxyanthranilate + L-alanine + H(+). Its pathway is amino-acid degradation; L-kynurenine degradation; L-alanine and anthranilate from L-kynurenine: step 1/1. The protein operates within cofactor biosynthesis; NAD(+) biosynthesis; quinolinate from L-kynurenine: step 2/3. Functionally, catalyzes the cleavage of L-kynurenine (L-Kyn) and L-3-hydroxykynurenine (L-3OHKyn) into anthranilic acid (AA) and 3-hydroxyanthranilic acid (3-OHAA), respectively. In Aspergillus oryzae (strain ATCC 42149 / RIB 40) (Yellow koji mold), this protein is Kynureninase 1 (bna5-1).